A 646-amino-acid polypeptide reads, in one-letter code: Amyloid beta A4 precursor protein-binding family B member 1-interacting protein (646 aa).

A disordered region spans residues 82-141 (FATERDTSKGSVPVAPAPSKPQSNFSLPASFDSSKPATSSNSIAAPPPPPAFKPSKEEEE). Residues 101 to 116 (KPQSNFSLPASFDSSK) show a composition bias toward polar residues. The Ras-associating domain maps to 162-248 (KKLVVKVEIT…NKVLFQEKKH (87 aa)). The region spanning 292–401 (VPDLEGVLYL…WVTGIRVAKY (110 aa)) is the PH domain. The disordered stretch occupies residues 420–646 (ASWANRTIQA…NAMQKKRTQP (227 aa)). Residues 429–445 (ASSTASTPSPTPKAKAA) are compositionally biased toward low complexity. Composition is skewed to pro residues over residues 465–500 (LPPPPPSMDFLPPPPPDPMFPPPPPAPPAPPAPPVP), 509–536 (FPPPPKFPQSSFPPPPMDDLPPPPPPPE), 560–577 (LPPPPPDPVASLPPPPPA), and 584–598 (APPPPPPPPPPPAPA).

It belongs to the MRL family.

The protein resides in the cell membrane. The protein localises to the cytoplasm. It is found in the cytoskeleton. In terms of biological role, appears to function in the signal transduction from Ras activation to actin cytoskeletal remodeling. This Danio rerio (Zebrafish) protein is Amyloid beta A4 precursor protein-binding family B member 1-interacting protein (apbb1ip).